We begin with the raw amino-acid sequence, 652 residues long: Acetyl-coenzyme A synthetase (652 aa).

Residues 191–194 (RAGN) and T311 each bind CoA. Residues 387–389 (GEP), 411–416 (DTWWQT), D503, and R518 each bind ATP. S526 is a binding site for CoA. R529 is an ATP binding site. Mg(2+)-binding residues include V540, H542, and V545. CoA is bound at residue R587. Position 613 is an N6-acetyllysine (K613).

The protein belongs to the ATP-dependent AMP-binding enzyme family. Mg(2+) serves as cofactor. Acetylated. Deacetylation by the SIR2-homolog deacetylase activates the enzyme.

It carries out the reaction acetate + ATP + CoA = acetyl-CoA + AMP + diphosphate. In terms of biological role, catalyzes the conversion of acetate into acetyl-CoA (AcCoA), an essential intermediate at the junction of anabolic and catabolic pathways. AcsA undergoes a two-step reaction. In the first half reaction, AcsA combines acetate with ATP to form acetyl-adenylate (AcAMP) intermediate. In the second half reaction, it can then transfer the acetyl group from AcAMP to the sulfhydryl group of CoA, forming the product AcCoA. The sequence is that of Acetyl-coenzyme A synthetase from Marinomonas sp. (strain MWYL1).